The following is a 152-amino-acid chain: Ribosome maturation factor RimP (152 aa).

This sequence belongs to the RimP family.

The protein localises to the cytoplasm. Its function is as follows. Required for maturation of 30S ribosomal subunits. This is Ribosome maturation factor RimP from Paraburkholderia phymatum (strain DSM 17167 / CIP 108236 / LMG 21445 / STM815) (Burkholderia phymatum).